The primary structure comprises 99 residues: Large ribosomal subunit protein bL28 (99 aa).

It belongs to the bacterial ribosomal protein bL28 family.

This is Large ribosomal subunit protein bL28 from Rhodospirillum rubrum (strain ATCC 11170 / ATH 1.1.1 / DSM 467 / LMG 4362 / NCIMB 8255 / S1).